Here is a 241-residue protein sequence, read N- to C-terminus: Uracil-DNA glycosylase (241 aa).

Asp71 serves as the catalytic Proton acceptor. The tract at residues 221 to 241 (ISPIDWSLPPRNELDTTSAGA) is disordered.

This sequence belongs to the uracil-DNA glycosylase (UDG) superfamily. UNG family.

The protein resides in the cytoplasm. It catalyses the reaction Hydrolyzes single-stranded DNA or mismatched double-stranded DNA and polynucleotides, releasing free uracil.. In terms of biological role, excises uracil residues from the DNA which can arise as a result of misincorporation of dUMP residues by DNA polymerase or due to deamination of cytosine. The chain is Uracil-DNA glycosylase from Xanthomonas oryzae pv. oryzae (strain MAFF 311018).